We begin with the raw amino-acid sequence, 236 residues long: Aspartate/glutamate leucyltransferase (236 aa).

This sequence belongs to the R-transferase family. Bpt subfamily.

It localises to the cytoplasm. It catalyses the reaction N-terminal L-glutamyl-[protein] + L-leucyl-tRNA(Leu) = N-terminal L-leucyl-L-glutamyl-[protein] + tRNA(Leu) + H(+). The catalysed reaction is N-terminal L-aspartyl-[protein] + L-leucyl-tRNA(Leu) = N-terminal L-leucyl-L-aspartyl-[protein] + tRNA(Leu) + H(+). Functions in the N-end rule pathway of protein degradation where it conjugates Leu from its aminoacyl-tRNA to the N-termini of proteins containing an N-terminal aspartate or glutamate. This chain is Aspartate/glutamate leucyltransferase, found in Saccharophagus degradans (strain 2-40 / ATCC 43961 / DSM 17024).